Consider the following 147-residue polypeptide: Methylglyoxal synthase (147 aa).

Residues 1 to 147 (MKGQRNIGMV…TPYVKRLGAK (147 aa)) enclose the MGS-like domain. Residues histidine 12, lysine 16, 38 to 41 (TGTT), and 59 to 60 (SG) each bind substrate. Aspartate 65 (proton donor/acceptor) is an active-site residue. Histidine 92 provides a ligand contact to substrate.

This sequence belongs to the methylglyoxal synthase family.

The enzyme catalyses dihydroxyacetone phosphate = methylglyoxal + phosphate. In terms of biological role, catalyzes the formation of methylglyoxal from dihydroxyacetone phosphate. The sequence is that of Methylglyoxal synthase from Oleidesulfovibrio alaskensis (strain ATCC BAA-1058 / DSM 17464 / G20) (Desulfovibrio alaskensis).